Here is a 451-residue protein sequence, read N- to C-terminus: Serine/threonine-protein kinase VRK3 (451 aa).

Disordered regions lie at residues 28–61 (KHEG…SKKV) and 74–125 (LPSE…MTAS). The span at 32–45 (SQSFVKPFTSSSQG) shows a compositional bias: polar residues. Positions 47–62 (RRKTNTSSETSSKKVK) match the Nuclear localization signal motif. Phosphoserine occurs at positions 53, 57, 80, 81, 88, and 106. The segment covering 78–91 (GKSSGSEDTLSTSG) has biased composition (polar residues). The segment covering 98–116 (SRSPTPRSSPQTTRQSPQT) has biased composition (low complexity). The 312-residue stretch at 123–434 (TASLEALPVG…TLRNELEALL (312 aa)) folds into the Protein kinase domain.

The protein belongs to the protein kinase superfamily. CK1 Ser/Thr protein kinase family. VRK subfamily. As to quaternary structure, interacts with DUSP3. Interacts with RAN. Interacts with HSP70/HSPA1A. Phosphorylated at Ser-106 by CDK5; leading to protection of the cell against H2O2-induced apoptosis. Post-translationally, ubiquitinated by RNF144A.

It is found in the nucleus. The protein localises to the cytoplasm. The catalysed reaction is L-seryl-[protein] + ATP = O-phospho-L-seryl-[protein] + ADP + H(+). Functionally, plays a role in the regulation of the cell cycle by phosphorylating the nuclear envelope protein barrier-to-autointegration factor/BAF that is required for disassembly and reassembly, respectively, of the nuclear envelope during mitosis. Under normal physiological conditions, negatively regulates ERK activity along with VHR phosphatase in the nucleus, causing timely and transient action of ERK. Stress conditions activate CDK5 which phosphorylates VRK3 to increase VHR phosphatase activity and suppress prolonged ERK activation that causes cell death. For example, upon glutamate induction, promotes nuclear localization of HSP70/HSPA1A to inhibit ERK activation via VHR phosphatase. The chain is Serine/threonine-protein kinase VRK3 (VRK3) from Bos taurus (Bovine).